A 339-amino-acid chain; its full sequence is Ketol-acid reductoisomerase (NADP(+)) (339 aa).

The region spanning 1-182 (MRVYYDRDAD…GGGRSGIIET (182 aa)) is the KARI N-terminal Rossmann domain. NADP(+) is bound by residues 24–27 (YGSQ), K48, S51, T53, and 83–86 (DELQ). H108 is a catalytic residue. G134 contributes to the NADP(+) binding site. A KARI C-terminal knotted domain is found at 183 to 328 (NFREECETDL…AKLRGMMPWI (146 aa)). Positions 191, 195, 227, and 231 each coordinate Mg(2+). Residue S252 participates in substrate binding.

Belongs to the ketol-acid reductoisomerase family. The cofactor is Mg(2+).

The enzyme catalyses (2R)-2,3-dihydroxy-3-methylbutanoate + NADP(+) = (2S)-2-acetolactate + NADPH + H(+). It catalyses the reaction (2R,3R)-2,3-dihydroxy-3-methylpentanoate + NADP(+) = (S)-2-ethyl-2-hydroxy-3-oxobutanoate + NADPH + H(+). Its pathway is amino-acid biosynthesis; L-isoleucine biosynthesis; L-isoleucine from 2-oxobutanoate: step 2/4. The protein operates within amino-acid biosynthesis; L-valine biosynthesis; L-valine from pyruvate: step 2/4. Its function is as follows. Involved in the biosynthesis of branched-chain amino acids (BCAA). Catalyzes an alkyl-migration followed by a ketol-acid reduction of (S)-2-acetolactate (S2AL) to yield (R)-2,3-dihydroxy-isovalerate. In the isomerase reaction, S2AL is rearranged via a Mg-dependent methyl migration to produce 3-hydroxy-3-methyl-2-ketobutyrate (HMKB). In the reductase reaction, this 2-ketoacid undergoes a metal-dependent reduction by NADPH to yield (R)-2,3-dihydroxy-isovalerate. This Rhizobium etli (strain ATCC 51251 / DSM 11541 / JCM 21823 / NBRC 15573 / CFN 42) protein is Ketol-acid reductoisomerase (NADP(+)).